The sequence spans 279 residues: Large ribosomal subunit protein uL2 (279 aa).

Disordered regions lie at residues 1-59 (MGIR…GGHK) and 224-279 (VAMN…KNKR). 2 stretches are compositionally biased toward basic residues: residues 50 to 59 (TTRHKGGGHK) and 269 to 279 (VRRRRTGKNKR).

This sequence belongs to the universal ribosomal protein uL2 family. Part of the 50S ribosomal subunit. Forms a bridge to the 30S subunit in the 70S ribosome.

Functionally, one of the primary rRNA binding proteins. Required for association of the 30S and 50S subunits to form the 70S ribosome, for tRNA binding and peptide bond formation. It has been suggested to have peptidyltransferase activity; this is somewhat controversial. Makes several contacts with the 16S rRNA in the 70S ribosome. This Arthrobacter sp. (strain FB24) protein is Large ribosomal subunit protein uL2.